The chain runs to 310 residues: tRNA dimethylallyltransferase (310 aa).

Position 13 to 20 (13 to 20 (GPTASGKT)) interacts with ATP. Residue 15–20 (TASGKT) participates in substrate binding. Interaction with substrate tRNA stretches follow at residues 38–41 (DSAL), 162–166 (QRLSR), 243–248 (RCVGYR), and 276–283 (KRQITWLR).

It belongs to the IPP transferase family. As to quaternary structure, monomer. Requires Mg(2+) as cofactor.

The catalysed reaction is adenosine(37) in tRNA + dimethylallyl diphosphate = N(6)-dimethylallyladenosine(37) in tRNA + diphosphate. Catalyzes the transfer of a dimethylallyl group onto the adenine at position 37 in tRNAs that read codons beginning with uridine, leading to the formation of N6-(dimethylallyl)adenosine (i(6)A). This is tRNA dimethylallyltransferase from Vibrio campbellii (strain ATCC BAA-1116).